A 438-amino-acid chain; its full sequence is Gamma-glutamyl phosphate reductase (438 aa).

Belongs to the gamma-glutamyl phosphate reductase family.

It localises to the cytoplasm. The enzyme catalyses L-glutamate 5-semialdehyde + phosphate + NADP(+) = L-glutamyl 5-phosphate + NADPH + H(+). Its pathway is amino-acid biosynthesis; L-proline biosynthesis; L-glutamate 5-semialdehyde from L-glutamate: step 2/2. Its function is as follows. Catalyzes the NADPH-dependent reduction of L-glutamate 5-phosphate into L-glutamate 5-semialdehyde and phosphate. The product spontaneously undergoes cyclization to form 1-pyrroline-5-carboxylate. This Prochlorococcus marinus (strain MIT 9303) protein is Gamma-glutamyl phosphate reductase.